The following is a 251-amino-acid chain: MSGHSKWATTKHKKAVIDARRGKNFAKLIKNIEVAARTGGGDPGGNPTLYDAIQKAKKNSVPNDNIERARKRGAGEEAGGADWQNITYEGYGPNGVAILVECLTDNKNRAAGEVRVAMTRNGGNMADPGSVAYLFTRKGVVTLDKNGLSEDDVLAAVLDAGAEDVNDLGDSFEIISEPTDLVAVRTALQDAGIEYDSAEASFQPSVSVPVDLDGARKVLKLVDALEDSDDVQDVYTNVDIPDDVAAQLDAD.

It belongs to the TACO1 family.

The protein localises to the cytoplasm. The sequence is that of Probable transcriptional regulatory protein Mflv_3828 from Mycolicibacterium gilvum (strain PYR-GCK) (Mycobacterium gilvum (strain PYR-GCK)).